Reading from the N-terminus, the 238-residue chain is DNA repair protein RecO (238 aa).

Belongs to the RecO family.

In terms of biological role, involved in DNA repair and RecF pathway recombination. This chain is DNA repair protein RecO, found in Aliivibrio salmonicida (strain LFI1238) (Vibrio salmonicida (strain LFI1238)).